Here is a 127-residue protein sequence, read N- to C-terminus: Large ribosomal subunit protein bL20 (127 aa).

The protein belongs to the bacterial ribosomal protein bL20 family.

Binds directly to 23S ribosomal RNA and is necessary for the in vitro assembly process of the 50S ribosomal subunit. It is not involved in the protein synthesizing functions of that subunit. This is Large ribosomal subunit protein bL20 from Corynebacterium diphtheriae (strain ATCC 700971 / NCTC 13129 / Biotype gravis).